The primary structure comprises 307 residues: Upstream stimulatory factor 1 (307 aa).

2 disordered regions span residues 104–131 (DDNG…SVGG) and 168–207 (QGGS…VERR). Over residues 122-131 (PTDSSTSVGG) the composition is skewed to low complexity. A compositionally biased stretch (basic and acidic residues) spans 187–207 (DGPRTTRDDKRRAQHNEVERR). One can recognise a bHLH domain in the interval 196-251 (KRRAQHNEVERRRRDKINNWIVQLSKIIPDCSMESTKTGQSKGGILSKACDYIQEL). Residues 268 to 289 (LQMDNEVLRQQVEDLKNNNLTL) are leucine-zipper.

Efficient DNA binding requires dimerization with another bHLH protein. Binds DNA as a homodimer or a heterodimer. As to expression, oocyte and somatic tissue. Oocytic and somatic forms of this protein exist, probably as a result of post-translational modifications or minor splicing differences.

Its subcellular location is the nucleus. Functionally, may act as a regulator of transcription factor IIIA (TFIIIA) gene expression. The chain is Upstream stimulatory factor 1 (usf1) from Xenopus borealis (Kenyan clawed frog).